The primary structure comprises 342 residues: Anthranilate phosphoribosyltransferase (342 aa).

5-phospho-alpha-D-ribose 1-diphosphate contacts are provided by residues glycine 83, 86 to 87, threonine 91, 93 to 96, 111 to 119, and serine 123; these read GD, NIST, and KHGNRGVSS. Residue glycine 83 participates in anthranilate binding. Position 95 (serine 95) interacts with Mg(2+). Asparagine 114 serves as a coordination point for anthranilate. Arginine 169 serves as a coordination point for anthranilate. Mg(2+)-binding residues include aspartate 228 and glutamate 229.

The protein belongs to the anthranilate phosphoribosyltransferase family. Homodimer. Mg(2+) is required as a cofactor.

It carries out the reaction N-(5-phospho-beta-D-ribosyl)anthranilate + diphosphate = 5-phospho-alpha-D-ribose 1-diphosphate + anthranilate. Its pathway is amino-acid biosynthesis; L-tryptophan biosynthesis; L-tryptophan from chorismate: step 2/5. In terms of biological role, catalyzes the transfer of the phosphoribosyl group of 5-phosphorylribose-1-pyrophosphate (PRPP) to anthranilate to yield N-(5'-phosphoribosyl)-anthranilate (PRA). This chain is Anthranilate phosphoribosyltransferase, found in Paraburkholderia phymatum (strain DSM 17167 / CIP 108236 / LMG 21445 / STM815) (Burkholderia phymatum).